A 283-amino-acid chain; its full sequence is Bifunctional protein FolD (283 aa).

NADP(+)-binding positions include 165 to 167, serine 190, and valine 231; that span reads GRS.

Belongs to the tetrahydrofolate dehydrogenase/cyclohydrolase family. As to quaternary structure, homodimer.

It carries out the reaction (6R)-5,10-methylene-5,6,7,8-tetrahydrofolate + NADP(+) = (6R)-5,10-methenyltetrahydrofolate + NADPH. The enzyme catalyses (6R)-5,10-methenyltetrahydrofolate + H2O = (6R)-10-formyltetrahydrofolate + H(+). Its pathway is one-carbon metabolism; tetrahydrofolate interconversion. In terms of biological role, catalyzes the oxidation of 5,10-methylenetetrahydrofolate to 5,10-methenyltetrahydrofolate and then the hydrolysis of 5,10-methenyltetrahydrofolate to 10-formyltetrahydrofolate. This chain is Bifunctional protein FolD, found in Anoxybacillus flavithermus (strain DSM 21510 / WK1).